We begin with the raw amino-acid sequence, 544 residues long: Lysophosphatidylcholine acyltransferase 2 (544 aa).

Over 1-58 (MNRCAEAAAVAATVPGSGVGDAGLRPPMVPRQASFFPPPVPNPFVQQTTISASRRLQM) the chain is Cytoplasmic. Residues 59–79 (FLLGIILLPVRALLVGIILLL) traverse the membrane as a helical; Signal-anchor for type II membrane protein segment. Topologically, residues 80–544 (AWPFAVISTA…EEGTSDKKVD (465 aa)) are lumenal. The HXXXXD motif signature appears at 146–151 (HSTFFD). An EGTC motif motif is present at residues 220–223 (EGTC). 2 EF-hand domains span residues 391–426 (PVSD…LCNP) and 428–463 (NTEE…SLGV). Ca(2+) contacts are provided by D404, N406, D408, S410, E415, D441, D443, D445, Y447, and E452. Positions 520 to 532 (TAPSVASNKVSPE) are enriched in polar residues. Positions 520–544 (TAPSVASNKVSPESQEEGTSDKKVD) are disordered.

Belongs to the 1-acyl-sn-glycerol-3-phosphate acyltransferase family. In terms of tissue distribution, highest expression is found in resident macrophages and casein-induced neutrophils followed by skin, colon, spleen and thioglycollate-induced macrophages. Detected in erythroleukemic cells but not in reticulocytes.

Its subcellular location is the endoplasmic reticulum membrane. It localises to the golgi apparatus membrane. The protein localises to the cell membrane. It is found in the lipid droplet. It carries out the reaction a 1-acyl-sn-glycero-3-phosphocholine + an acyl-CoA = a 1,2-diacyl-sn-glycero-3-phosphocholine + CoA. It catalyses the reaction a 1-O-alkyl-sn-glycero-3-phosphocholine + acetyl-CoA = a 1-O-alkyl-2-acetyl-sn-glycero-3-phosphocholine + CoA. The enzyme catalyses a 1-acyl-sn-glycero-3-phosphate + an acyl-CoA = a 1,2-diacyl-sn-glycero-3-phosphate + CoA. The catalysed reaction is a 1-O-(1Z-alkenyl)-sn-glycero-3-phosphocholine + an acyl-CoA = a 1-O-(1Z-alkenyl)-2-acyl-sn-glycero-3-phosphocholine + CoA. It carries out the reaction 1-O-octadecyl-sn-glycero-3-phosphocholine + acetyl-CoA = 1-O-octadecyl-2-acetyl-sn-glycero-3-phosphocholine + CoA. It catalyses the reaction 1-hexadecanoyl-sn-glycero-3-phosphocholine + acetyl-CoA = 1-hexadecanoyl-2-acetyl-sn-glycero-3-phosphocholine + CoA. The enzyme catalyses 1-octadecanoyl-sn-glycero-3-phosphocholine + acetyl-CoA = 1-octadecanoyl-2-acetyl-sn-glycero-3-phosphocholine + CoA. The catalysed reaction is a 1-O-(1Z-alkenyl)-sn-glycero-3-phosphocholine + acetyl-CoA = 1-O-(1Z)-alkenyl-2-acetyl-sn-glycero-3-phosphocholine + CoA. It carries out the reaction 1-O-hexadecyl-sn-glycero-3-phosphocholine + acetyl-CoA = 1-O-hexadecyl-2-acetyl-sn-glycero-3-phosphocholine + CoA. It catalyses the reaction 1-O-octadecyl-sn-glycero-3-phosphocholine + (5Z,8Z,11Z,14Z)-eicosatetraenoyl-CoA = 1-O-octadecyl-2-(5Z,8Z,11Z,14Z)-eicosatetraenoyl-sn-glycero-3-phosphocholine + CoA. The enzyme catalyses 1-hexadecanoyl-sn-glycero-3-phosphate + (9Z)-octadecenoyl-CoA = 1-hexadecanoyl-2-(9Z-octadecenoyl)-sn-glycero-3-phosphate + CoA. The catalysed reaction is 1-(9Z-octadecenoyl)-sn-glycero-3-phosphate + (9Z)-octadecenoyl-CoA = 1,2-di-(9Z-octadecenoyl)-sn-glycero-3-phosphate + CoA. It carries out the reaction 1-(9Z-octadecenoyl)-sn-glycero-3-phosphate + hexadecanoyl-CoA = 1-(9Z)-octadecenoyl-2-hexadecanoyl-sn-glycero-3-phosphate + CoA. It catalyses the reaction 1-heptadecanoyl-sn-glycero-3-phosphate + (9Z)-octadecenoyl-CoA = 1-heptadecanoyl-2-(9Z)-octadecenoyl-sn-glycero-3-phosphate + CoA. The enzyme catalyses 1-octadecanoyl-sn-glycero-3-phosphate + (9Z)-octadecenoyl-CoA = 1-octadecanoyl-2-(9Z-octadecenoyl)-sn-glycero-3-phosphate + CoA. The catalysed reaction is heptadecanoyl-CoA + 1-(9Z-octadecenoyl)-sn-glycero-3-phosphate = 1-(9Z)-octadecenoyl-2-heptadecanoyl-sn-glycero-3-phosphate + CoA. It carries out the reaction 1-(9Z-octadecenoyl)-sn-glycero-3-phosphate + (9Z,12Z)-octadecadienoyl-CoA = 1-(9Z)-octadecenoyl-2-(9Z,12Z)-octadecadienoyl-sn-glycero-3-phosphate + CoA. It catalyses the reaction 1-(9Z-octadecenoyl)-sn-glycero-3-phosphate + tetradecanoyl-CoA = 1-(9Z)-octadecenoyl-2-tetradecanoyl-sn-glycero-3-phosphate + CoA. The enzyme catalyses pentadecanoyl-CoA + 1-(9Z-octadecenoyl)-sn-glycero-3-phosphate = 1-(9Z)-octadecenoyl-2-pentadecanoyl-sn-glycero-3-phosphate + CoA. The catalysed reaction is nonadecanoyl-CoA + 1-(9Z-octadecenoyl)-sn-glycero-3-phosphate = 1-(9Z)-octadecenoyl-2-nonadecanoyl-sn-glycero-3-phosphate + CoA. It carries out the reaction 1-hexadecanoyl-sn-glycero-3-phosphocholine + (9Z)-octadecenoyl-CoA = 1-hexadecanoyl-2-(9Z-octadecenoyl)-sn-glycero-3-phosphocholine + CoA. The protein operates within lipid metabolism; phospholipid metabolism. With respect to regulation, acetyltransferase activity is increased following acute inflammatory stimulation by lipopolysaccharide (LPS). Acyltransferase activity is unchanged. In terms of biological role, exhibits both acyltransferase and acetyltransferase activities. Activity is calcium-dependent. Catalyzes the conversion of lysophosphatidylcholine (1-acyl-sn-glycero-3-phosphocholine or LPC) into phosphatidylcholine (1,2-diacyl-sn-glycero-3-phosphocholine or PC). Catalyzes the conversion 1-acyl-sn-glycerol-3-phosphate (lysophosphatidic acid or LPA) into 1,2-diacyl-sn-glycerol-3-phosphate (phosphatidic acid or PA) by incorporating an acyl moiety at the sn-2 position of the glycerol backbone. Involved in platelet-activating factor (PAF) biosynthesis by catalyzing the conversion of the PAF precursor, 1-O-alkyl-sn-glycero-3-phosphocholine (lyso-PAF) into 1-O-alkyl-2-acetyl-sn-glycero-3-phosphocholine (PAF). Also converts lyso-PAF to 1-O-alkyl-2-acyl-sn-glycero-3-phosphocholine (PC), a major component of cell membranes and a PAF precursor. Under resting conditions, acyltransferase activity is preferred. Upon acute inflammatory stimulus, acetyltransferase activity is enhanced and PAF synthesis increases. Involved in the regulation of lipid droplet number and size. The chain is Lysophosphatidylcholine acyltransferase 2 (Lpcat2) from Mus musculus (Mouse).